Consider the following 1070-residue polypeptide: Granule associated Rac and RHOG effector protein 1 (1070 aa).

3 disordered regions span residues 681 to 771 (EQKA…VGAG), 855 to 992 (SQAM…STLP), and 1032 to 1070 (SYVQ…LPQY). Residues 692–702 (PSLPVPPPPRA) are compositionally biased toward pro residues. 3 stretches are compositionally biased toward low complexity: residues 719-742 (PQQQ…QPIG), 906-924 (AQGD…NGDS), and 951-962 (TSTLPSPPLLTT). The residue at position 723 (S723) is a Phosphoserine. Residues 977–992 (PKAPWQHPSPLPSTLP) show a composition bias toward pro residues. Low complexity predominate over residues 1046–1058 (HKAAPKGFKAFPG).

Interacts with AGO2 and TNRC6A.

Its subcellular location is the cytoplasm. The protein resides in the P-body. Its function is as follows. Acts as an effector of RAC1. Associates with CCR4-NOT complex which is one of the major cellular mRNA deadenylases and is linked to various cellular processes including bulk mRNA degradation, miRNA-mediated repression, translational repression during translational initiation and general transcription regulation. May also play a role in miRNA silencing machinery. This Homo sapiens (Human) protein is Granule associated Rac and RHOG effector protein 1.